A 109-amino-acid chain; its full sequence is Phycoerythrin alpha-2 subunit (109 aa).

The (2R,3E)-phycoerythrobilin site is built by aspartate 52, serine 53, glutamate 63, arginine 64, cysteine 67, threonine 72, lysine 74, alanine 75, and lysine 84.

The protein belongs to the phycoerythrin family. In terms of assembly, heterotetramer of 2 different alpha chains and 2 identical beta chains which form 2 alpha-beta heterodimers within the heterotetramer. The two alpha-beta heterodimers are rotated to an open configuration in contrast to the closed configuration found in other cryptophyte species due to the insertion of a single amino acid, Asp-65, in a conserved region of the alpha chain. In the open form, the central chromophores are not in physical contact but are separated by a water-filled channel. Contains three phycoerythrobilin chromophores with binding mediated by both the alpha and beta subunits.

Its subcellular location is the plastid. It localises to the chloroplast thylakoid membrane. In terms of biological role, light-harvesting photosynthetic tetrapyrrole chromophore-protein from the phycobiliprotein complex. This is Phycoerythrin alpha-2 subunit from Hemiselmis andersenii (Cryptophyte alga).